The chain runs to 634 residues: 1-deoxy-D-xylulose-5-phosphate synthase (634 aa).

Residues H74 and A115 to S117 each bind thiamine diphosphate. D146 lines the Mg(2+) pocket. Thiamine diphosphate-binding positions include G147–A148, N176, Y283, and E365. Mg(2+) is bound at residue N176.

The protein belongs to the transketolase family. DXPS subfamily. Homodimer. The cofactor is Mg(2+). Thiamine diphosphate is required as a cofactor.

It carries out the reaction D-glyceraldehyde 3-phosphate + pyruvate + H(+) = 1-deoxy-D-xylulose 5-phosphate + CO2. Its pathway is metabolic intermediate biosynthesis; 1-deoxy-D-xylulose 5-phosphate biosynthesis; 1-deoxy-D-xylulose 5-phosphate from D-glyceraldehyde 3-phosphate and pyruvate: step 1/1. Its function is as follows. Catalyzes the acyloin condensation reaction between C atoms 2 and 3 of pyruvate and glyceraldehyde 3-phosphate to yield 1-deoxy-D-xylulose-5-phosphate (DXP). The chain is 1-deoxy-D-xylulose-5-phosphate synthase from Burkholderia pseudomallei (strain 668).